Consider the following 463-residue polypeptide: Glycine--tRNA ligase (463 aa).

Substrate contacts are provided by arginine 100 and glutamate 175. Residues 207 to 209 (RNE), 217 to 222 (FRTREF), 291 to 292 (EL), and 335 to 338 (GADR) contribute to the ATP site. 222-226 (FEQME) is a substrate binding site. 331–335 (EPSLG) provides a ligand contact to substrate.

The protein belongs to the class-II aminoacyl-tRNA synthetase family. In terms of assembly, homodimer.

Its subcellular location is the cytoplasm. The enzyme catalyses tRNA(Gly) + glycine + ATP = glycyl-tRNA(Gly) + AMP + diphosphate. Catalyzes the attachment of glycine to tRNA(Gly). This is Glycine--tRNA ligase from Clostridium tetani (strain Massachusetts / E88).